The sequence spans 451 residues: Molybdate-anion transporter (451 aa).

Transmembrane regions (helical) follow at residues 1–21 (MLVT…VLEF), 45–65 (YDFY…GPYL), 79–99 (IAII…VSVP), 130–150 (FVLM…FSCF), 180–200 (NGGI…WLGL), 201–221 (GPAS…VLVI), 251–271 (VLLL…FIFL), 281–301 (APLG…SSLY), 316–336 (VLCL…FSTA), 346–366 (LLAF…MRFL), 378–398 (GVLN…LLVL), and 410–430 (MFSL…SLFT).

It belongs to the major facilitator superfamily.

It localises to the cell membrane. In terms of biological role, mediates high-affinity intracellular uptake of the rare oligo-element molybdenum. This chain is Molybdate-anion transporter (mfsd5), found in Xenopus laevis (African clawed frog).